The chain runs to 386 residues: Circumsporozoite protein (386 aa).

The signal sequence occupies residues 1–22; the sequence is MKNFILLAVSSILLVDLFPTHC. The disordered stretch occupies residues 51-304; it reads HVGQSASRGR…NEGANAPNEK (254 aa). The span at 72–100 shows a compositional bias: basic and acidic residues; sequence DAKKKKDGKKAEPKNPRENKLKQPGDRAD. The required for the binding to heparan sulfate proteoglycans (HSPGs) on the surface of host hepatocytes stretch occupies residues 80–88; sequence KKAEPKNPR. Positions 91–95 are region I; contains the proteolytic cleavage site; that stretch reads KLKQP. 20 tandem repeats follow at residues 96 to 104, 105 to 113, 114 to 122, 123 to 131, 132 to 140, 141 to 149, 150 to 158, 159 to 167, 168 to 176, 177 to 185, 186 to 194, 195 to 203, 204 to 212, 213 to 221, 222 to 230, 231 to 239, 240 to 248, 249 to 257, 258 to 266, and 267 to 275. The interval 96–275 is 20 X 9 AA tandem repeats of G-D-R-A-[AD]-G-Q-P-A; the sequence is GDRADGQPAG…AGDRAAGQPA (180 aa). Gly residues predominate over residues 275-292; sequence AGNGAGGQAAGGNAGGQG. A compositionally biased stretch (low complexity) spans 293–303; that stretch reads QNNEGANAPNE. Residues 312-364 enclose the TSP type-1 domain; sequence KVRATVGTEWTPCSVTCGVGVRVRRRVNAANKKPEDLTLNDLETDVCTMDKCA. Disulfide bonds link Cys-324–Cys-358 and Cys-328–Cys-363. Thr-327 is a glycosylation site (O-linked (Fuc) threonine). Cys-363 carries GPI-anchor amidated cysteine lipidation. The propeptide at 364–386 is removed in mature form; it reads AGIFNVVSNSLGLVILLVLALFN.

It belongs to the plasmodium circumsporozoite protein family. In terms of processing, during host cell invasion, proteolytically cleaved at the cell membrane in the region I by a papain-like cysteine protease of parasite origin. Cleavage is triggered by the sporozoite contact with highly sulfated heparan sulfate proteoglycans (HSPGs) present on the host hepatocyte cell surface. Cleavage exposes the TSP type-1 (TSR) domain and is required for productive invasion of host hepatocytes but not for adhesion to the host cell membrane. Cleavage is dispensable for sporozoite development in the oocyst, motility and for traversal of host and vector cells. Post-translationally, O-glycosylated; maybe by POFUT2.

It is found in the cell membrane. The protein resides in the cytoplasm. Its function is as follows. Essential sporozoite protein. In the mosquito vector, required for sporozoite development in the oocyst, migration through the vector hemolymph and entry into the vector salivary glands. In the vertebrate host, required for sporozoite migration through the host dermis and infection of host hepatocytes. Binds to highly sulfated heparan sulfate proteoglycans (HSPGs) on the surface of host hepatocytes. In terms of biological role, in the vertebrate host, binds to highly sulfated heparan sulfate proteoglycans (HSPGs) on the surface of host hepatocytes and is required for sporozoite invasion of the host hepatocytes. The protein is Circumsporozoite protein of Plasmodium simium.